The chain runs to 226 residues: Ribonuclease 3 (226 aa).

The RNase III domain occupies 6-128 (IQKLQKILGY…LIGSIFLDSN (123 aa)). E41 is a binding site for Mg(2+). Residue D45 is part of the active site. 2 residues coordinate Mg(2+): N114 and E117. E117 is an active-site residue. A DRBM domain is found at 155–225 (DPKTRLQEYL…AQNALIKLGI (71 aa)).

This sequence belongs to the ribonuclease III family. In terms of assembly, homodimer. Requires Mg(2+) as cofactor.

Its subcellular location is the cytoplasm. It catalyses the reaction Endonucleolytic cleavage to 5'-phosphomonoester.. In terms of biological role, digests double-stranded RNA. Involved in the processing of primary rRNA transcript to yield the immediate precursors to the large and small rRNAs (23S and 16S). Processes some mRNAs, and tRNAs when they are encoded in the rRNA operon. Processes pre-crRNA and tracrRNA of type II CRISPR loci if present in the organism. The sequence is that of Ribonuclease 3 from Buchnera aphidicola subsp. Baizongia pistaciae (strain Bp).